The following is a 366-amino-acid chain: Alanine racemase (366 aa).

Lysine 40 functions as the Proton acceptor; specific for D-alanine in the catalytic mechanism. The residue at position 40 (lysine 40) is an N6-(pyridoxal phosphate)lysine. Arginine 136 is a binding site for substrate. The active-site Proton acceptor; specific for L-alanine is tyrosine 263. Methionine 310 is a substrate binding site.

This sequence belongs to the alanine racemase family. It depends on pyridoxal 5'-phosphate as a cofactor.

The enzyme catalyses L-alanine = D-alanine. It functions in the pathway amino-acid biosynthesis; D-alanine biosynthesis; D-alanine from L-alanine: step 1/1. In terms of biological role, catalyzes the interconversion of L-alanine and D-alanine. May also act on other amino acids. The sequence is that of Alanine racemase (alr) from Streptococcus pyogenes serotype M1.